A 218-amino-acid chain; its full sequence is MSENVVVIYSGGMDSFTVLHKALRAGKKVHALSFDYGQRHKKELDYAAAVCTSLGVPHKIVDISAINTLIGGSALTSDIDVPEGHYEEPSMKQTVVPNRNMILLSLAVGYAVSLDANEVYYGAHSGDHAIYPDCRPEFVHKMNDVCGIANYTPVTIMTPYIKDSKTAILTDGLSMGLDYGQTWTCYNGREKACGKCGACEERLEAFKDNGATDPLEYE.

ATP is bound at residue 9 to 19 (YSGGMDSFTVL). Zn(2+)-binding residues include C185, C193, C196, and C199.

It belongs to the QueC family. The cofactor is Zn(2+).

The catalysed reaction is 7-carboxy-7-deazaguanine + NH4(+) + ATP = 7-cyano-7-deazaguanine + ADP + phosphate + H2O + H(+). It functions in the pathway purine metabolism; 7-cyano-7-deazaguanine biosynthesis. Functionally, catalyzes the ATP-dependent conversion of 7-carboxy-7-deazaguanine (CDG) to 7-cyano-7-deazaguanine (preQ(0)). This chain is 7-cyano-7-deazaguanine synthase, found in Alteromonas mediterranea (strain DSM 17117 / CIP 110805 / LMG 28347 / Deep ecotype).